The primary structure comprises 486 residues: Glutamyl-tRNA(Gln) amidotransferase subunit A (486 aa).

Residues lysine 75 and serine 150 each act as charge relay system in the active site. Serine 174 (acyl-ester intermediate) is an active-site residue.

Belongs to the amidase family. GatA subfamily. Heterotrimer of A, B and C subunits.

The enzyme catalyses L-glutamyl-tRNA(Gln) + L-glutamine + ATP + H2O = L-glutaminyl-tRNA(Gln) + L-glutamate + ADP + phosphate + H(+). Its function is as follows. Allows the formation of correctly charged Gln-tRNA(Gln) through the transamidation of misacylated Glu-tRNA(Gln) in organisms which lack glutaminyl-tRNA synthetase. The reaction takes place in the presence of glutamine and ATP through an activated gamma-phospho-Glu-tRNA(Gln). In Trichormus variabilis (strain ATCC 29413 / PCC 7937) (Anabaena variabilis), this protein is Glutamyl-tRNA(Gln) amidotransferase subunit A.